A 685-amino-acid polypeptide reads, in one-letter code: Polyphosphate kinase (685 aa).

ATP is bound at residue asparagine 45. The Mg(2+) site is built by arginine 375 and arginine 405. Histidine 435 serves as the catalytic Phosphohistidine intermediate. ATP is bound by residues tyrosine 468, arginine 564, and histidine 592.

It belongs to the polyphosphate kinase 1 (PPK1) family. Requires Mg(2+) as cofactor. An intermediate of this reaction is the autophosphorylated ppk in which a phosphate is covalently linked to a histidine residue through a N-P bond.

The enzyme catalyses [phosphate](n) + ATP = [phosphate](n+1) + ADP. Catalyzes the reversible transfer of the terminal phosphate of ATP to form a long-chain polyphosphate (polyP). The polypeptide is Polyphosphate kinase (Neisseria meningitidis serogroup B (strain ATCC BAA-335 / MC58)).